The following is a 225-amino-acid chain: Membrane protein LapB (225 aa).

It to H.influenzae HI_1119.

It is found in the cell membrane. In Mannheimia haemolytica (Pasteurella haemolytica), this protein is Membrane protein LapB (lapB).